Reading from the N-terminus, the 236-residue chain is Rho-related GTP-binding protein RhoV (236 aa).

A disordered region spans residues 1–27; that stretch reads MPPRELSEAEPPPLPASTPPPRRRSAP. The span at 10–20 shows a compositional bias: pro residues; it reads EPPPLPASTPP. Ser-25 carries the post-translational modification Phosphoserine. GTP contacts are provided by residues 38–45, 85–89, and 143–146; these read GDGAVGKS, DTAGQ, and TQAD. Residue Cys-234 is the site of S-palmitoyl cysteine attachment.

It belongs to the small GTPase superfamily. Rho family. In terms of assembly, interacts with PAK2. It depends on Mg(2+) as a cofactor.

It localises to the cell membrane. The protein resides in the endosome membrane. In terms of biological role, plays a role in the control of the actin cytoskeleton via activation of the JNK pathway. The chain is Rho-related GTP-binding protein RhoV from Mus musculus (Mouse).